The primary structure comprises 946 residues: Protein dct-6 (946 aa).

Positions 326–363 (YMDMNDQIEQMIALLVDQLEELEKLEQLCDEVQKTGNQ) form a coiled coil.

May have a role in tumor suppression. This chain is Protein dct-6, found in Caenorhabditis briggsae.